Reading from the N-terminus, the 142-residue chain is Matrix protein (142 aa).

As to quaternary structure, homooligomer. Forms homotetramers. Interacts with phosphoprotein P. Binds to ssRNA.

The protein resides in the virion. It localises to the host cytoplasm. The protein localises to the host cell membrane. It is found in the host nucleus. Its function is as follows. Plays a crucial role in virion assembly and budding. The chain is Matrix protein (M) from Borna disease virus (strain V) (BDV).